We begin with the raw amino-acid sequence, 87 residues long: MGQEQDTPWILSTGHISTQKRQDGQQTPKLEHRNSTRLMGHCQKTMNQVVMPKQIVYWKQWLSLRNPILVFLKTRVLKRWRLFSKHE.

The segment at 1–38 is disordered; that stretch reads MGQEQDTPWILSTGHISTQKRQDGQQTPKLEHRNSTRL. Positions 14-28 are enriched in polar residues; sequence GHISTQKRQDGQQTP. The mitochondrial targeting sequence stretch occupies residues 65–87; sequence RNPILVFLKTRVLKRWRLFSKHE.

The protein belongs to the influenza viruses PB1-F2 family. As to quaternary structure, oligomer. Interacts with human SLC25A6/ANT3 and VDAC1. Interacts with host MAVS.

It is found in the host mitochondrion inner membrane. The protein localises to the host nucleus. The protein resides in the host cytoplasm. Its subcellular location is the host cytosol. In terms of biological role, plays an important role in promoting lung pathology in both primary viral infection and secondary bacterial infection. Promotes alteration of mitochondrial morphology, dissipation of mitochondrial membrane potential, and cell death. Alternatively, inhibits the production of interferon in the infected cell at the level of host mitochondrial antiviral signaling MAVS. Its level of expression differs greatly depending on which cell type is infected, in a manner that is independent of the levels of expression of other viral proteins. Monocytic cells are more affected than epithelial cells. Seems to disable virus-infected monocytes or other host innate immune cells. During early stage of infection, predisposes the mitochondria to permeability transition through interaction with host SLC25A6/ANT3 and VDAC1. These proteins participate in the formation of the permeability transition pore complex (PTPC) responsible of the release of mitochondrial products that triggers apoptosis. The protein is Protein PB1-F2 of Influenza A virus (strain A/Puerto Rico/8/1934 H1N1).